The sequence spans 695 residues: G-patch and R3H domain-containing protein C30B4.02c (695 aa).

Disordered stretches follow at residues 168-200 (SDKEISSTEESEQLCYKEQESEKELYSKDNDDS), 213-242 (DIANNNAAPPPPLAQAQEQLSTENEDEFDI), 257-317 (FADL…FDEG), 332-351 (GNTDSLAEDEDDILEEDEDE), 388-448 (DSED…VAAR), and 475-517 (DKSK…DSDN). Residues 182-198 (CYKEQESEKELYSKDND) show a composition bias toward basic and acidic residues. Acidic residues-rich tracts occupy residues 262–286 (VLEEDDDDEDEDEELEGEKEEEEEE), 307–317 (EDSESLEFDEG), and 337–351 (LAEDEDDILEEDEDE). The span at 421-434 (KKDRKLPKKMRKAQ) shows a compositional bias: basic residues. Positions 525 to 587 (KIFINDVYQR…KRYTMLSKTH (63 aa)) constitute an R3H domain. Residues 652–695 (KENPGRRLLEKLGWYAGKGLGHPENEGSKDSLRAIVKVSRSGLG) form the G-patch domain.

It localises to the cytoplasm. The sequence is that of G-patch and R3H domain-containing protein C30B4.02c from Schizosaccharomyces pombe (strain 972 / ATCC 24843) (Fission yeast).